The sequence spans 276 residues: Shikimate dehydrogenase (NADP(+)) (276 aa).

Residues 14-16 (SKS) and T61 contribute to the shikimate site. Residue K65 is the Proton acceptor of the active site. Position 77 (D77) interacts with NADP(+). The shikimate site is built by N86 and D102. Residues 127-131 (GAGGA), 151-156 (NRTPDK), and M214 contribute to the NADP(+) site. Y216 contributes to the shikimate binding site. Position 238 (G238) interacts with NADP(+).

This sequence belongs to the shikimate dehydrogenase family. As to quaternary structure, homodimer.

It carries out the reaction shikimate + NADP(+) = 3-dehydroshikimate + NADPH + H(+). Its pathway is metabolic intermediate biosynthesis; chorismate biosynthesis; chorismate from D-erythrose 4-phosphate and phosphoenolpyruvate: step 4/7. Its function is as follows. Involved in the biosynthesis of the chorismate, which leads to the biosynthesis of aromatic amino acids. Catalyzes the reversible NADPH linked reduction of 3-dehydroshikimate (DHSA) to yield shikimate (SA). This chain is Shikimate dehydrogenase (NADP(+)), found in Nitrosomonas europaea (strain ATCC 19718 / CIP 103999 / KCTC 2705 / NBRC 14298).